Consider the following 704-residue polypeptide: PHD finger protein MALE MEIOCYTE DEATH 1 (704 aa).

Residues 606–656 (MVKCICRARDDDGERMISCDVCEVWQHTRCCGIDDSDTLPPLFVCSNCCEE) form a PHD-type zinc finger. Residues C609, C611, C624, C627, H632, C635, C650, and C653 each coordinate Zn(2+).

In terms of assembly, interacts with JMJ16 in the nucleus of male meiocytes, especially on pachytene chromosomes. Expressed in inflorescence, specifically in male meiocytes.

The protein localises to the nucleus. Functionally, probable transcription factor required for chromosome organization and progression during male meiosis (e.g. microsporogenesis). Necessary for fertility and meiotic progressive compaction of prophase I chromosomes to metaphase I bivalents. Together with JMJ16, promotes gene expression in male meiocytes in an H3K9me3-dependent manner, and contributes to meiotic chromosome condensation by triggering some condensin promoters (e.g. CAP-D3 and CAP-H). The chain is PHD finger protein MALE MEIOCYTE DEATH 1 from Arabidopsis thaliana (Mouse-ear cress).